Here is a 34-residue protein sequence, read N- to C-terminus: MSDIN-like toxin proprotein 12 (34 aa).

Residues 1–10 (MSDINATRLP) constitute a propeptide that is removed on maturation. Positions 11 to 19 (HPFPLGLQP) form a cross-link, cyclopeptide (His-Pro). A propeptide spanning residues 20 to 34 (CAGDVDNLTLTKGEG) is cleaved from the precursor.

This sequence belongs to the MSDIN fungal toxin family. Post-translationally, processed by the macrocyclase-peptidase enzyme POPB to yield a toxic cyclic nonapeptide. POPB first removes 10 residues from the N-terminus. Conformational trapping of the remaining peptide forces the enzyme to release this intermediate rather than proceed to macrocyclization. The enzyme rebinds the remaining peptide in a different conformation and catalyzes macrocyclization of the N-terminal 9 residues.

Probable toxin that belongs to the MSDIN-like toxin family responsible for a large number of food poisoning cases and deaths. The chain is MSDIN-like toxin proprotein 12 from Amanita bisporigera (Destroying angel).